The primary structure comprises 434 residues: Eukaryotic translation initiation factor 3 subunit E-1 (434 aa).

Positions 219 to 392 (FFNHPKGRDL…GHVVMGTQPL (174 aa)) constitute a PCI domain.

It belongs to the eIF-3 subunit E family. As to quaternary structure, component of the eukaryotic translation initiation factor 3 (eIF-3) complex. The eIF-3 complex interacts with pix. Interacts with mxt.

The protein localises to the cytoplasm. Component of the eukaryotic translation initiation factor 3 (eIF-3) complex, which is involved in protein synthesis of a specialized repertoire of mRNAs and, together with other initiation factors, stimulates binding of mRNA and methionyl-tRNAi to the 40S ribosome. The eIF-3 complex specifically targets and initiates translation of a subset of mRNAs involved in cell proliferation. The chain is Eukaryotic translation initiation factor 3 subunit E-1 (eIF3-S6-1) from Drosophila willistoni (Fruit fly).